Here is a 1622-residue protein sequence, read N- to C-terminus: ABC transporter C family member 1 (1622 aa).

The next 9 helical transmembrane spans lie at 37–57 (FVLGISHLVLLILCLYRLWLI), 73–93 (FSYFLALLAAYATAEPLFRLV), 110–130 (EAFMLVLEAFAWGSALVMTVV), 145–165 (FAVIYALVGDMVLLNLVLSVK), 174–194 (YLYISEVAVQVAFGTLLFVYF), 336–356 (AWIGYIYAISIFVGVVLGVLC), 440–460 (VASIIGALFLVLMFPIQTVII), 527–547 (FILNSIPVLVTVVSFGVFSLL), and 557–577 (FTSLSLFSVLRFPLFMLPNII). Residues 302–582 (FWWGGFWKIG…LPNIITQMVN (281 aa)) form the ABC transmembrane type-1 1 domain. One can recognise an ABC transporter 1 domain in the interval 614-838 (ISIRNGYFSW…GPLFQRLMEN (225 aa)). 649 to 656 (GSTGEGKT) contributes to the ATP binding site. A disordered region spans residues 852–876 (AEVDQTSVKPVENGNANNLQKDGIE). A compositionally biased stretch (polar residues) spans 855-871 (DQTSVKPVENGNANNLQ). The next 6 helical transmembrane spans lie at 909 to 929 (ALGGAWVVMMLVICYVLTQVF), 951 to 971 (PLFYNIVYALLSFGQVSVTLI), 1027 to 1049 (AVFVNMFMGSIAQLLSTVILIGI), 1053 to 1072 (LSLWAIMPLLVVFYGAYLYY), 1138 to 1158 (LGIRLEVLGGLMVWLTASLAV), and 1172 to 1192 (STMGLLLSYALSITSSLTAVL). The 285-residue stretch at 916 to 1200 (VMMLVICYVL…VLRLASLAEN (285 aa)) folds into the ABC transmembrane type-1 2 domain. An interaction with calmodulin and FKP42/TWD1 region spans residues 1231 to 1246 (WPSSGSIKFEDVVLRY). One can recognise an ABC transporter 2 domain in the interval 1237-1471 (IKFEDVVLRY…GESSFSKMVQ (235 aa)). 1271-1278 (GRTGAGKS) contributes to the ATP binding site.

The protein belongs to the ABC transporter superfamily. ABCC family. Conjugate transporter (TC 3.A.1.208) subfamily. Interacts with calmodulin (CaM), PAS1 and FKBP42/TWD1. In terms of tissue distribution, ubiquitous, with higher levels in leaves and stems and lower levels in roots. Localized in the root apex, root hair tips and root epidermis.

Its subcellular location is the vacuole membrane. It carries out the reaction ATP + H2O + xenobioticSide 1 = ADP + phosphate + xenobioticSide 2.. In terms of biological role, pump for glutathione S-conjugates. Mediates the transport of S-(2,4-dinitrophenyl)-glutathione (DNP-GS), GSSG, cyanidin 3-glucoside-GS (C3G-GS) and metolachlor-GS (MOC-GS). This Arabidopsis thaliana (Mouse-ear cress) protein is ABC transporter C family member 1 (ABCC1).